The primary structure comprises 272 residues: Shikimate dehydrogenase (NADP(+)) (272 aa).

Residues 14 to 16 and threonine 61 each bind shikimate; that span reads SKS. The Proton acceptor role is filled by lysine 65. Glutamate 77 is an NADP(+) binding site. Residues asparagine 86 and aspartate 102 each contribute to the shikimate site. Residues 126 to 130, 149 to 154, and methionine 213 contribute to the NADP(+) site; these read GAGGA and NRTVSR. Tyrosine 215 serves as a coordination point for shikimate. Glycine 237 contributes to the NADP(+) binding site.

The protein belongs to the shikimate dehydrogenase family. Homodimer.

It carries out the reaction shikimate + NADP(+) = 3-dehydroshikimate + NADPH + H(+). It functions in the pathway metabolic intermediate biosynthesis; chorismate biosynthesis; chorismate from D-erythrose 4-phosphate and phosphoenolpyruvate: step 4/7. Involved in the biosynthesis of the chorismate, which leads to the biosynthesis of aromatic amino acids. Catalyzes the reversible NADPH linked reduction of 3-dehydroshikimate (DHSA) to yield shikimate (SA). The chain is Shikimate dehydrogenase (NADP(+)) from Shigella sonnei (strain Ss046).